The sequence spans 144 residues: 3-dehydroquinate dehydratase (144 aa).

The Proton acceptor role is filled by Y24. 3 residues coordinate substrate: N76, H82, and D89. H102 (proton donor) is an active-site residue. Substrate contacts are provided by residues 103-104 (LS) and R113.

It belongs to the type-II 3-dehydroquinase family. In terms of assembly, homododecamer.

The enzyme catalyses 3-dehydroquinate = 3-dehydroshikimate + H2O. It functions in the pathway metabolic intermediate biosynthesis; chorismate biosynthesis; chorismate from D-erythrose 4-phosphate and phosphoenolpyruvate: step 3/7. In terms of biological role, catalyzes a trans-dehydration via an enolate intermediate. The sequence is that of 3-dehydroquinate dehydratase from Bordetella bronchiseptica (strain ATCC BAA-588 / NCTC 13252 / RB50) (Alcaligenes bronchisepticus).